The following is a 62-amino-acid chain: UPF0434 protein ABO_2103 (62 aa).

This sequence belongs to the UPF0434 family.

This is UPF0434 protein ABO_2103 from Alcanivorax borkumensis (strain ATCC 700651 / DSM 11573 / NCIMB 13689 / SK2).